A 584-amino-acid polypeptide reads, in one-letter code: ATP-dependent lipid A-core flippase (584 aa).

5 helical membrane-spanning segments follow: residues Leu-15–Val-35, Ile-63–Ile-83, Leu-153–Val-173, Thr-251–Leu-271, and Gly-277–Val-297. The region spanning Leu-27–Arg-309 is the ABC transmembrane type-1 domain. Positions Leu-341–Leu-576 constitute an ABC transporter domain. Gly-375–Thr-382 is an ATP binding site.

It belongs to the ABC transporter superfamily. Lipid exporter (TC 3.A.1.106) family. As to quaternary structure, homodimer.

The protein localises to the cell inner membrane. It carries out the reaction ATP + H2O + lipid A-core oligosaccharideSide 1 = ADP + phosphate + lipid A-core oligosaccharideSide 2.. Its function is as follows. Involved in lipopolysaccharide (LPS) biosynthesis. Translocates lipid A-core from the inner to the outer leaflet of the inner membrane. Transmembrane domains (TMD) form a pore in the inner membrane and the ATP-binding domain (NBD) is responsible for energy generation. This is ATP-dependent lipid A-core flippase from Chromobacterium violaceum (strain ATCC 12472 / DSM 30191 / JCM 1249 / CCUG 213 / NBRC 12614 / NCIMB 9131 / NCTC 9757 / MK).